The following is a 61-amino-acid chain: Protein CopA/IncA (61 aa).

Its function is as follows. Controls the copy number in gene replication. The chain is Protein CopA/IncA (copA) from Escherichia coli.